The following is a 171-amino-acid chain: Cardioactive peptide (171 aa).

Residues 1-26 form the signal peptide; the sequence is MQMYHVVLGCSLAILLVILDIPQASC. A propeptide spanning residues 27–49 is cleaved from the precursor; sequence DDVVIQKRQVDPAEMDRLLDPKR. Cys54 and Cys60 are oxidised to a cystine. Position 60 is a cysteine amide (Cys60). The propeptide occupies 64–171; the sequence is RSDESMGTLV…QEEITKPWSR (108 aa). The tract at residues 116 to 171 is disordered; sequence QSNQFGAGMDRPLPLPIAGYRRKRFADPESQAPAPHSNLPRATSQLQEEITKPWSR.

In terms of tissue distribution, central nervous system; most neurons exhibit coexpression with burs.

It localises to the secreted. Functionally, cardioregulatory neurohormone that increases heart beat rate during adult wing inflation; has no effect on beat amplitude. The effect of CCAP is both ino- and chronotropic. The sequence is that of Cardioactive peptide from Periplaneta americana (American cockroach).